A 178-amino-acid polypeptide reads, in one-letter code: Adenine phosphoribosyltransferase (178 aa).

This sequence belongs to the purine/pyrimidine phosphoribosyltransferase family. As to quaternary structure, homodimer.

Its subcellular location is the cytoplasm. It catalyses the reaction AMP + diphosphate = 5-phospho-alpha-D-ribose 1-diphosphate + adenine. The protein operates within purine metabolism; AMP biosynthesis via salvage pathway; AMP from adenine: step 1/1. Catalyzes a salvage reaction resulting in the formation of AMP, that is energically less costly than de novo synthesis. The sequence is that of Adenine phosphoribosyltransferase from Mycoplasmoides gallisepticum (strain R(low / passage 15 / clone 2)) (Mycoplasma gallisepticum).